A 342-amino-acid chain; its full sequence is UDP-3-O-acylglucosamine N-acyltransferase (342 aa).

The active-site Proton acceptor is His-253.

It belongs to the transferase hexapeptide repeat family. LpxD subfamily. As to quaternary structure, homotrimer.

It carries out the reaction a UDP-3-O-[(3R)-3-hydroxyacyl]-alpha-D-glucosamine + a (3R)-hydroxyacyl-[ACP] = a UDP-2-N,3-O-bis[(3R)-3-hydroxyacyl]-alpha-D-glucosamine + holo-[ACP] + H(+). It participates in bacterial outer membrane biogenesis; LPS lipid A biosynthesis. Functionally, catalyzes the N-acylation of UDP-3-O-acylglucosamine using 3-hydroxyacyl-ACP as the acyl donor. Is involved in the biosynthesis of lipid A, a phosphorylated glycolipid that anchors the lipopolysaccharide to the outer membrane of the cell. The chain is UDP-3-O-acylglucosamine N-acyltransferase from Rickettsia bellii (strain RML369-C).